Consider the following 121-residue polypeptide: UPF0102 protein DehaBAV1_0707 (121 aa).

The protein belongs to the UPF0102 family.

The sequence is that of UPF0102 protein DehaBAV1_0707 from Dehalococcoides mccartyi (strain ATCC BAA-2100 / JCM 16839 / KCTC 5957 / BAV1).